A 198-amino-acid chain; its full sequence is Nucleoid occlusion factor SlmA (198 aa).

Residues 9–70 (RNRREEILQA…SLIEFIEDSL (62 aa)) form the HTH tetR-type domain. A DNA-binding region (H-T-H motif) is located at residues 33–52 (TTAKLAANVGVSEAALYRHF). Positions 117–144 (EQDRLQGRINQLFERIEAQLRQVLKERK) form a coiled coil.

This sequence belongs to the nucleoid occlusion factor SlmA family. As to quaternary structure, homodimer. Interacts with FtsZ.

It is found in the cytoplasm. It localises to the nucleoid. Required for nucleoid occlusion (NO) phenomenon, which prevents Z-ring formation and cell division over the nucleoid. Acts as a DNA-associated cell division inhibitor that binds simultaneously chromosomal DNA and FtsZ, and disrupts the assembly of FtsZ polymers. SlmA-DNA-binding sequences (SBS) are dispersed on non-Ter regions of the chromosome, preventing FtsZ polymerization at these regions. The protein is Nucleoid occlusion factor SlmA of Serratia proteamaculans (strain 568).